The following is a 190-amino-acid chain: 6,7-dimethyl-8-ribityllumazine synthase (190 aa).

5-amino-6-(D-ribitylamino)uracil-binding positions include phenylalanine 23, 61-63, and 85-87; these read SFE and AVI. Residue 90 to 91 participates in (2S)-2-hydroxy-3-oxobutyl phosphate binding; sequence QT. The active-site Proton donor is the histidine 93. Phenylalanine 118 is a 5-amino-6-(D-ribitylamino)uracil binding site. Arginine 132 is a (2S)-2-hydroxy-3-oxobutyl phosphate binding site.

Belongs to the DMRL synthase family.

The catalysed reaction is (2S)-2-hydroxy-3-oxobutyl phosphate + 5-amino-6-(D-ribitylamino)uracil = 6,7-dimethyl-8-(1-D-ribityl)lumazine + phosphate + 2 H2O + H(+). It participates in cofactor biosynthesis; riboflavin biosynthesis; riboflavin from 2-hydroxy-3-oxobutyl phosphate and 5-amino-6-(D-ribitylamino)uracil: step 1/2. In terms of biological role, catalyzes the formation of 6,7-dimethyl-8-ribityllumazine by condensation of 5-amino-6-(D-ribitylamino)uracil with 3,4-dihydroxy-2-butanone 4-phosphate. This is the penultimate step in the biosynthesis of riboflavin. In Trichormus variabilis (strain ATCC 29413 / PCC 7937) (Anabaena variabilis), this protein is 6,7-dimethyl-8-ribityllumazine synthase.